The sequence spans 61 residues: Large ribosomal subunit protein bL32 (61 aa).

Belongs to the bacterial ribosomal protein bL32 family.

This Ehrlichia canis (strain Jake) protein is Large ribosomal subunit protein bL32.